A 130-amino-acid polypeptide reads, in one-letter code: L-ectoine synthase (130 aa).

This sequence belongs to the ectoine synthase family.

The enzyme catalyses (2S)-4-acetamido-2-aminobutanoate = L-ectoine + H2O. Its pathway is amine and polyamine biosynthesis; ectoine biosynthesis; L-ectoine from L-aspartate 4-semialdehyde: step 3/3. Functionally, catalyzes the circularization of gamma-N-acetyl-alpha,gamma-diaminobutyric acid (ADABA) to ectoine (1,4,5,6-tetrahydro-2-methyl-4-pyrimidine carboxylic acid), which is an excellent osmoprotectant. The sequence is that of L-ectoine synthase from Mycobacteroides abscessus (strain ATCC 19977 / DSM 44196 / CCUG 20993 / CIP 104536 / JCM 13569 / NCTC 13031 / TMC 1543 / L948) (Mycobacterium abscessus).